Consider the following 313-residue polypeptide: Ribosomal RNA small subunit methyltransferase H (313 aa).

S-adenosyl-L-methionine-binding positions include 34 to 36, aspartate 54, phenylalanine 81, aspartate 102, and glutamine 109; that span reads GGH. The tract at residues 289–313 is disordered; it reads IAGPEETDRNPRARSAKLRAAEKLG.

It belongs to the methyltransferase superfamily. RsmH family.

Its subcellular location is the cytoplasm. It catalyses the reaction cytidine(1402) in 16S rRNA + S-adenosyl-L-methionine = N(4)-methylcytidine(1402) in 16S rRNA + S-adenosyl-L-homocysteine + H(+). In terms of biological role, specifically methylates the N4 position of cytidine in position 1402 (C1402) of 16S rRNA. In Trichlorobacter lovleyi (strain ATCC BAA-1151 / DSM 17278 / SZ) (Geobacter lovleyi), this protein is Ribosomal RNA small subunit methyltransferase H.